Reading from the N-terminus, the 540-residue chain is MAVSSCARAFPSFECRSDAEFSGGIPRHDIPNSGKASILSHGSSVHGLSSLIYRFPPNFVRQLSIKARRNCSNIGVAQVVAASWSNNNSSPDFTPVAKAVDAAAAAAAAIAPVDTTVVNEDVALVENETCNDQNVQFDSLPSMKYASFLNSDGSVAIHAGERLGRGIVTDAITTPVVNTSAYFFNKTSELIDFKEKRRASFEYGRYGNPTTVVLEEKISALEGAESTLLMASGMCASTVMLLALVPAGGHIVTTTDCYRKTRIFIETILPKMGITATVIDPADVGALELALNQKKVNLFFTESPTNPFLRCVDIELVSKLCHEKGALVCIDGTFATPLNQKALALGADLVLHSATKFLGGHNDVLAGCISGPLKLVSEIRNLHHILGGALNPNAAYLIIRGMKTLHLRVQQQNSTALRMAEILEAHPKVRHVYYPGLQSHPEHHIAKKQMTGFGGVVSFEVDGDLLTTAKFVDALKIPYIAPSFGGCESIVDQPAIMSYWDLSQSDRAKYGIMDNLVRFSFGVEDFDDLKADILQALDSI.

Residues 1–78 (MAVSSCARAF…RNCSNIGVAQ (78 aa)) constitute a chloroplast transit peptide. Pyridoxal 5'-phosphate is bound by residues Tyr-203, Arg-205, Gly-233, Met-234, Tyr-258, Ser-353, and Thr-355. An N6-(pyridoxal phosphate)lysine modification is found at Lys-356.

Belongs to the trans-sulfuration enzymes family. Forms homotetramers composed of 2 homodimers. The cofactor is pyridoxal 5'-phosphate.

It is found in the plastid. The protein localises to the chloroplast. The catalysed reaction is O-phospho-L-homoserine + L-cysteine = L,L-cystathionine + phosphate. It carries out the reaction O-succinyl-L-homoserine + L-cysteine = L,L-cystathionine + succinate + H(+). Its pathway is amino-acid biosynthesis; L-methionine biosynthesis via de novo pathway; L-cystathionine from O-succinyl-L-homoserine: step 1/1. With respect to regulation, irreversibly inactivated by DL-propargylglycine. Catalyzes the first committed step of methionine (Met) biosynthesis. Catalyzes the formation of L-cystathionine from homoserine esters and L-cysteine, via a gamma-replacement reaction. This Nicotiana tabacum (Common tobacco) protein is Cystathionine gamma-synthase 1, chloroplastic.